The following is an 871-amino-acid chain: MAAKKSQKVTPLMQQYNSIKLKYPDAMLLFRVGDFYETFGEDAVKAARILNIVLTNRNNGGERTELAGFPHHSLNTYLPKLVKAGQRVAICDQLEDPKMTKTIVKRGVTELVTPGVAMNDDILNSKSNNFLCAVHFGKKNLGVSFLDVSTGEFLCAQGNTEYIDKLLQNFGPSEILVQKKFKKEFNESFGKDKHCFYLDDWIFKIDYSEETLNAHFQTKSLKGFGIDHLEEGIIASGAVLYYLAETRHHRLQHINSINRIAEEQYVWMDRFTIRNLELYHSTAANAVTLLDVIDKTISPMGGRLLKRWLALPLKDAEMIEKRLQVVDFLIKNPEILANIQDQIREISDLERLISKVATQKISPREVNQLKNSLNAIIPVKELALKCNNEALKIIGDNLHSCDLLREKISESISEDAPVLIQRGGVIASGFSSELDELRGLAFSGKDYLDKMIQRETEKTGISSLKIGSNNVYGYYIEVRNTHKDKVPEEWTRKQTLVNAERYITEELKEYESKILGAEEKILHLEQELFGKLIAWMAEYIDPVQQNARLIARLDCLCSFAQQAQAENYSKPEITDSYGMDIEEGRHPVIEKQLPPGEVYVTNNLHLDREEQQIIMITGPNMSGKSAILRQTALIVLMAQMGSFVPARSAEIGLVDKIFTRVGASDNISMGESTFMVEMNETASILNNISDRSLVLLDEIGRGTSTYDGISIAWAISEYLHEHPAKPKTLFATHYHELNEMCETFERIKNFNVSVKELKDNVLFLRKLVPGGSEHSFGIHVAKMAGMPQMVLHRANKILAKLEASHSMEDSGAVLKKSAEDEMQLSFFNLDDPLLEDLKQELLGIDIDTLTPVEALMKLNEIKRMLGNNKQQ.

Glycine 618 to serine 625 serves as a coordination point for ATP.

The protein belongs to the DNA mismatch repair MutS family.

In terms of biological role, this protein is involved in the repair of mismatches in DNA. It is possible that it carries out the mismatch recognition step. This protein has a weak ATPase activity. This chain is DNA mismatch repair protein MutS, found in Christiangramia forsetii (strain DSM 17595 / CGMCC 1.15422 / KT0803) (Gramella forsetii).